We begin with the raw amino-acid sequence, 492 residues long: Phenylalanine--tRNA ligase alpha subunit (492 aa).

L-phenylalanine contacts are provided by residues T335, 374 to 376 (QLE), and Y414. Residue E416 participates in Mg(2+) binding. F439 is an L-phenylalanine binding site.

The protein belongs to the class-II aminoacyl-tRNA synthetase family. Phe-tRNA synthetase alpha subunit type 2 subfamily. As to quaternary structure, tetramer of two alpha and two beta subunits. It depends on Mg(2+) as a cofactor.

It localises to the cytoplasm. It carries out the reaction tRNA(Phe) + L-phenylalanine + ATP = L-phenylalanyl-tRNA(Phe) + AMP + diphosphate + H(+). This Methanosarcina acetivorans (strain ATCC 35395 / DSM 2834 / JCM 12185 / C2A) protein is Phenylalanine--tRNA ligase alpha subunit.